Consider the following 119-residue polypeptide: Phosphoribosyl-AMP cyclohydrolase (119 aa).

Residue Asp72 participates in Mg(2+) binding. Zn(2+) is bound at residue Cys73. Residues Asp74 and Asp76 each coordinate Mg(2+). Zn(2+)-binding residues include Cys89 and Cys96.

It belongs to the PRA-CH family. Homodimer. Requires Mg(2+) as cofactor. It depends on Zn(2+) as a cofactor.

Its subcellular location is the cytoplasm. The catalysed reaction is 1-(5-phospho-beta-D-ribosyl)-5'-AMP + H2O = 1-(5-phospho-beta-D-ribosyl)-5-[(5-phospho-beta-D-ribosylamino)methylideneamino]imidazole-4-carboxamide. Its pathway is amino-acid biosynthesis; L-histidine biosynthesis; L-histidine from 5-phospho-alpha-D-ribose 1-diphosphate: step 3/9. In terms of biological role, catalyzes the hydrolysis of the adenine ring of phosphoribosyl-AMP. The polypeptide is Phosphoribosyl-AMP cyclohydrolase (Methanocella arvoryzae (strain DSM 22066 / NBRC 105507 / MRE50)).